A 101-amino-acid chain; its full sequence is Large ribosomal subunit protein uL24 (101 aa).

Belongs to the universal ribosomal protein uL24 family. As to quaternary structure, part of the 50S ribosomal subunit.

Functionally, one of two assembly initiator proteins, it binds directly to the 5'-end of the 23S rRNA, where it nucleates assembly of the 50S subunit. In terms of biological role, one of the proteins that surrounds the polypeptide exit tunnel on the outside of the subunit. This is Large ribosomal subunit protein uL24 from Streptococcus pneumoniae (strain ATCC 700669 / Spain 23F-1).